Consider the following 98-residue polypeptide: Large ribosomal subunit protein uL23 (98 aa).

The protein belongs to the universal ribosomal protein uL23 family. Part of the 50S ribosomal subunit. Contacts protein L29, and trigger factor when it is bound to the ribosome.

One of the early assembly proteins it binds 23S rRNA. One of the proteins that surrounds the polypeptide exit tunnel on the outside of the ribosome. Forms the main docking site for trigger factor binding to the ribosome. The sequence is that of Large ribosomal subunit protein uL23 from Bifidobacterium longum (strain DJO10A).